Consider the following 661-residue polypeptide: UvrABC system protein B (661 aa).

The Helicase ATP-binding domain maps to 25-182 (AGLSSKKRSQ…NDLINLQYER (158 aa)). Position 38–45 (38–45 (GITGSGKT)) interacts with ATP. The short motif at 91–114 (YYDYYQPEAYIARTDTFIEKDSSI) is the Beta-hairpin element. The region spanning 430–592 (QVEDLISEIQ…IIPKTINRAI (163 aa)) is the Helicase C-terminal domain. The region spanning 621 to 656 (KTHIDKLKKEMLKAASNLEFEQAVKLRDQLKTLEEA) is the UVR domain.

It belongs to the UvrB family. As to quaternary structure, forms a heterotetramer with UvrA during the search for lesions. Interacts with UvrC in an incision complex.

It is found in the cytoplasm. The UvrABC repair system catalyzes the recognition and processing of DNA lesions. A damage recognition complex composed of 2 UvrA and 2 UvrB subunits scans DNA for abnormalities. Upon binding of the UvrA(2)B(2) complex to a putative damaged site, the DNA wraps around one UvrB monomer. DNA wrap is dependent on ATP binding by UvrB and probably causes local melting of the DNA helix, facilitating insertion of UvrB beta-hairpin between the DNA strands. Then UvrB probes one DNA strand for the presence of a lesion. If a lesion is found the UvrA subunits dissociate and the UvrB-DNA preincision complex is formed. This complex is subsequently bound by UvrC and the second UvrB is released. If no lesion is found, the DNA wraps around the other UvrB subunit that will check the other stand for damage. The polypeptide is UvrABC system protein B (Rickettsia rickettsii (strain Sheila Smith)).